A 1576-amino-acid chain; its full sequence is Spermatogenesis-associated protein 31D1 (1576 aa).

A helical membrane pass occupies residues 29–49 (FICLSGLGLFILYLFYVVLTL). 5 disordered regions span residues 170-197 (FTLA…PPPP), 542-572 (HESP…QGQS), 782-801 (KDHL…RSNS), 952-1033 (SQGD…TDFQ), and 1293-1347 (RVSP…PPPE). Residues 546 to 565 (VLPPPQPLSLPSTQPLPLPQ) are compositionally biased toward pro residues. A compositionally biased stretch (polar residues) spans 966 to 980 (RSTFQGEKLGTTSSV). Residues 1004–1019 (QFSDTDHDLIETDSKD) are compositionally biased toward basic and acidic residues. Residues 1020-1032 (GASTSLRRGTTDF) are compositionally biased toward polar residues.

It belongs to the SPATA31 family.

It is found in the membrane. Functionally, may play a role in spermatogenesis. This is Spermatogenesis-associated protein 31D1 (SPATA31D1) from Homo sapiens (Human).